We begin with the raw amino-acid sequence, 305 residues long: tRNA uridine(34) hydroxylase (305 aa).

Residues 125–219 enclose the Rhodanese domain; it reads ADENTVVVDT…YLEEVPREQS (95 aa). The active-site Cysteine persulfide intermediate is C179.

It belongs to the TrhO family.

The catalysed reaction is uridine(34) in tRNA + AH2 + O2 = 5-hydroxyuridine(34) in tRNA + A + H2O. In terms of biological role, catalyzes oxygen-dependent 5-hydroxyuridine (ho5U) modification at position 34 in tRNAs. This is tRNA uridine(34) hydroxylase from Brucella ovis (strain ATCC 25840 / 63/290 / NCTC 10512).